The chain runs to 332 residues: Fructose-1,6-bisphosphatase class 1 (332 aa).

Residues E89, D110, L112, and D113 each contribute to the Mg(2+) site. Substrate contacts are provided by residues 113–116 (DGSS), N206, Y239, 257–259 (YLY), and K269. E275 provides a ligand contact to Mg(2+).

It belongs to the FBPase class 1 family. As to quaternary structure, homotetramer. The cofactor is Mg(2+).

The protein resides in the cytoplasm. The enzyme catalyses beta-D-fructose 1,6-bisphosphate + H2O = beta-D-fructose 6-phosphate + phosphate. Its pathway is carbohydrate biosynthesis; gluconeogenesis. This chain is Fructose-1,6-bisphosphatase class 1, found in Escherichia coli O157:H7.